Consider the following 325-residue polypeptide: Ribonucleoside-diphosphate reductase subunit beta (325 aa).

Positions 73, 104, and 107 each coordinate Fe cation. Tyr111 is an active-site residue. The Fe cation site is built by Glu164, Glu198, and His201.

Belongs to the ribonucleoside diphosphate reductase small chain family. In terms of assembly, tetramer of two alpha and two beta subunits. Requires Fe cation as cofactor.

It carries out the reaction a 2'-deoxyribonucleoside 5'-diphosphate + [thioredoxin]-disulfide + H2O = a ribonucleoside 5'-diphosphate + [thioredoxin]-dithiol. Provides the precursors necessary for DNA synthesis. Catalyzes the biosynthesis of deoxyribonucleotides from the corresponding ribonucleotides. The polypeptide is Ribonucleoside-diphosphate reductase subunit beta (nrdF) (Mycobacterium leprae (strain TN)).